The primary structure comprises 336 residues: Inactive serine/threonine-protein kinase BKN2 (336 aa).

The tract at residues 1 to 25 is disordered; the sequence is MGNCLKPLKEQPPSASPKPLTIPSS. A lipid anchor (N-myristoyl glycine) is attached at glycine 2. Cysteine 4 carries the S-palmitoyl cysteine lipid modification. The region spanning 52–332 is the Protein kinase domain; it reads YMVIKGNDNG…QVFDGLNDIA (281 aa).

This sequence belongs to the protein kinase superfamily. Ser/Thr protein kinase family. As to quaternary structure, component of an immune signaling complex made of, at least, SZE1, BKN2/SZE2, ZAR1 and ZED1. Interacts directly with ZAR1 and Pseudomonas syringae HOPZ1A at the plasma membrane. Post-translationally, N-terminal myristoylation is critical for plasma membrane localization and implication in defense responses. As to expression, expressed in stigma and ovaries in flowers, and in stems and seedlings.

It is found in the cell membrane. In terms of biological role, together with SZE1 and ZED1, required for effector-triggered immunity (e.g. Pseudomonas syringae type III effector HopZ1a) via the activation of ZAR1, thus being essential for resistance against P. syringae pv. tomato DC3000 expressing HopZ1a. Collaboratively with BKN1, involved in compatible pollen-stigma interactions. The chain is Inactive serine/threonine-protein kinase BKN2 from Arabidopsis thaliana (Mouse-ear cress).